Consider the following 205-residue polypeptide: Troponin I, cardiac muscle (205 aa).

The tract at residues 1-38 (MADQSGNAAPPPVRRRSSANYRAYATEPHAKKKSKISA) is disordered. A2 is modified (N-acetylalanine). S5 is subject to Phosphoserine. S17 and S18 each carry phosphoserine; by PKA and PKD/PRKD1. Y21 is modified (phosphotyrosine). The residue at position 26 (T26) is a Phosphothreonine; by STK4/MST1. Residues 27-74 (EPHAKKKSKISASRKLQLKTLMLQIAKQELEREAVERRGEKGRALSTR) are involved in binding TNC. 2 positions are modified to phosphoserine; by PKC/PRKCE: S37 and S39. Position 46 is a phosphothreonine; by STK4/MST1 (T46). S72 bears the Phosphoserine mark. T73 carries the post-translational modification Phosphothreonine. Residues 124 to 145 (NQKIFDLRGKFKRPTLRRVRIS) are involved in binding TNC and actin. A Phosphothreonine; by STK4/MST1 modification is found at T138. S145 is modified (phosphoserine; by PAK3). At T176 the chain carries Phosphothreonine. S194 is subject to Phosphoserine.

It belongs to the troponin I family. As to quaternary structure, binds to actin and tropomyosin. Interacts with TRIM63. Interacts with STK4/MST1. In terms of processing, phosphorylated at Ser-17 and Ser-18 by PRKD1; phosphorylation reduces myofilament calcium sensitivity. Phosphorylated preferentially at Thr-26. Phosphorylation by STK4/MST1 alters its binding affinity to TNNC1 (cardiac Tn-C) and TNNT2 (cardiac Tn-T). Phosphorylated at Ser-37 and Ser-39 by PRKCE; phosphorylation increases myocardium contractile dysfunction.

In terms of biological role, troponin I is the inhibitory subunit of troponin, the thin filament regulatory complex which confers calcium-sensitivity to striated muscle actomyosin ATPase activity. The chain is Troponin I, cardiac muscle (TNNI3) from Equus caballus (Horse).